Reading from the N-terminus, the 338-residue chain is 1-aminocyclopropane-1-carboxylate deaminase (338 aa).

An N6-(pyridoxal phosphate)lysine modification is found at lysine 51. Serine 78 serves as the catalytic Nucleophile.

The protein belongs to the ACC deaminase/D-cysteine desulfhydrase family. In terms of assembly, homotrimer. Requires pyridoxal 5'-phosphate as cofactor.

The catalysed reaction is 1-aminocyclopropane-1-carboxylate + H2O = 2-oxobutanoate + NH4(+). Catalyzes a cyclopropane ring-opening reaction, the irreversible conversion of 1-aminocyclopropane-1-carboxylate (ACC) to ammonia and alpha-ketobutyrate. Allows growth on ACC as a nitrogen source. The chain is 1-aminocyclopropane-1-carboxylate deaminase from Burkholderia vietnamiensis (strain G4 / LMG 22486) (Burkholderia cepacia (strain R1808)).